Consider the following 1018-residue polypeptide: Serine/threonine-protein kinase 31 (1018 aa).

Residues 78–137 (NLDPKKIYGGLFSEDKCWYRCKVLKTISDDKCLVRYIDYGNTEILNRSDIVEIPPELQFS) form the Tudor domain. The stretch at 298–358 (AKIKQDQKLI…TKHLESTLKT (61 aa)) forms a coiled coil. The region spanning 711 to 1018 (IGLLKYMNSG…EKTRNGEANP (308 aa)) is the Protein kinase domain. Residues 717 to 725 (MNSGGLLTM) and lysine 738 each bind ATP. Residues 988–1018 (IECTQHSREDESKMESLDRYSEKTRNGEANP) are disordered.

It belongs to the protein kinase superfamily. Ser/Thr protein kinase family. Testis specific. Expressed only in male germ cells.

The enzyme catalyses L-seryl-[protein] + ATP = O-phospho-L-seryl-[protein] + ADP + H(+). It catalyses the reaction L-threonyl-[protein] + ATP = O-phospho-L-threonyl-[protein] + ADP + H(+). The polypeptide is Serine/threonine-protein kinase 31 (Stk31) (Mus musculus (Mouse)).